The following is a 493-amino-acid chain: C2H2-type transcription factor ffmA (493 aa).

Low complexity predominate over residues Met1–His18. 3 disordered regions span residues Met1–Pro50, Thr68–Gly140, and Glu164–Thr202. Polar residues-rich tracts occupy residues Thr69 to Leu79 and Asn192 to Thr202. The C2H2-type 1 zinc finger occupies Phe212 to His234. Residues Tyr240 to Arg265 form a C2H2-type 2; degenerate zinc finger. Composition is skewed to polar residues over residues Gln288–Pro307 and Ala484–Lys493. Disordered stretches follow at residues Gln288–Phe316 and Thr468–Lys493.

This sequence belongs to the krueppel C2H2-type zinc-finger protein family.

Its subcellular location is the nucleus. Its function is as follows. Transcription factor that acts in coordination with atrR to regulate the expression of the ABC-type multidrug transporter abcG1 and thus plays a role in azole susceptibility. Regulates the expression of genes involved in fermentation. Is able to promote expression from the yeast FLO11 promoter. The protein is C2H2-type transcription factor ffmA of Aspergillus fumigatus (strain CBS 144.89 / FGSC A1163 / CEA10) (Neosartorya fumigata).